Here is a 191-residue protein sequence, read N- to C-terminus: Xanthine phosphoribosyltransferase (191 aa).

2 residues coordinate xanthine: L20 and N27. 5-phospho-alpha-D-ribose 1-diphosphate is bound at residue 128 to 132 (ANGQA). A xanthine-binding site is contributed by K156.

It belongs to the purine/pyrimidine phosphoribosyltransferase family. Xpt subfamily. Homodimer.

It localises to the cytoplasm. It carries out the reaction XMP + diphosphate = xanthine + 5-phospho-alpha-D-ribose 1-diphosphate. Its pathway is purine metabolism; XMP biosynthesis via salvage pathway; XMP from xanthine: step 1/1. Functionally, converts the preformed base xanthine, a product of nucleic acid breakdown, to xanthosine 5'-monophosphate (XMP), so it can be reused for RNA or DNA synthesis. The chain is Xanthine phosphoribosyltransferase from Levilactobacillus brevis (strain ATCC 367 / BCRC 12310 / CIP 105137 / JCM 1170 / LMG 11437 / NCIMB 947 / NCTC 947) (Lactobacillus brevis).